The sequence spans 254 residues: Methylthioribulose-1-phosphate dehydratase (254 aa).

C110 contacts substrate. Residues H127 and H129 each contribute to the Zn(2+) site. E156 (proton donor/acceptor) is an active-site residue. H212 provides a ligand contact to Zn(2+).

This sequence belongs to the aldolase class II family. MtnB subfamily. Zn(2+) is required as a cofactor.

The protein resides in the cytoplasm. The enzyme catalyses 5-(methylsulfanyl)-D-ribulose 1-phosphate = 5-methylsulfanyl-2,3-dioxopentyl phosphate + H2O. It functions in the pathway amino-acid biosynthesis; L-methionine biosynthesis via salvage pathway; L-methionine from S-methyl-5-thio-alpha-D-ribose 1-phosphate: step 2/6. Functionally, catalyzes the dehydration of methylthioribulose-1-phosphate (MTRu-1-P) into 2,3-diketo-5-methylthiopentyl-1-phosphate (DK-MTP-1-P). In Talaromyces marneffei (strain ATCC 18224 / CBS 334.59 / QM 7333) (Penicillium marneffei), this protein is Methylthioribulose-1-phosphate dehydratase.